The sequence spans 188 residues: MEITQYQSFHEGSSSRVSMNRNSQVISKIKPKIRIIHIFAPEVIKTDVKNFRSLVQSLTGKPAPGEAKTGKKRAKSRITTPQEPVCDDHQPVNRLSGFTGLLANGGNHQVKEEWGSGDQSTSNTNTYFDLEGLIQDVGEDYFSSFPMRSSSSSQVEGFIFNNNNNNNNNNNNNNNNNTNFDTKAHNSS.

Disordered stretches follow at residues 1–20, 58–92, and 157–188; these read MEITQYQSFHEGSSSRVSMN, LTGKPAPGEAKTGKKRAKSRITTPQEPVCDDHQPV, and GFIFNNNNNNNNNNNNNNNNNTNFDTKAHNSS. Residues 51–60 carry the VQ motif; the sequence is FRSLVQSLTG. Positions 161-179 are enriched in low complexity; that stretch reads NNNNNNNNNNNNNNNNNTN.

It localises to the nucleus. Its function is as follows. May function as positive regulator of plant growth. This is VQ motif-containing protein 18 from Arabidopsis thaliana (Mouse-ear cress).